The sequence spans 155 residues: Transcriptional repressor NrdR (155 aa).

The segment at 3 to 34 is a zinc-finger region; that stretch reads CPFCGNIDTQVKDSRPAEDHVSIRRRRFCPAC. The region spanning 49 to 139 is the ATP-cone domain; the sequence is LVVIKSTGKR…VYKNFQAADD (91 aa).

The protein belongs to the NrdR family. The cofactor is Zn(2+).

In terms of biological role, negatively regulates transcription of bacterial ribonucleotide reductase nrd genes and operons by binding to NrdR-boxes. This Roseobacter denitrificans (strain ATCC 33942 / OCh 114) (Erythrobacter sp. (strain OCh 114)) protein is Transcriptional repressor NrdR.